Consider the following 1581-residue polypeptide: Pentafunctional AROM polypeptide (1581 aa).

The 3-dehydroquinate synthase stretch occupies residues 1–384 (MPEPTKISIL…YEPKASVVPN (384 aa)). Residues 44 to 46 (DTN), 81 to 84 (EVSK), 114 to 116 (GGV), and D119 contribute to the NAD(+) site. Residue R130 participates in 7-phospho-2-dehydro-3-deoxy-D-arabino-heptonate binding. 139–140 (TT) lines the NAD(+) pocket. The 7-phospho-2-dehydro-3-deoxy-D-arabino-heptonate site is built by D146 and K152. An NAD(+)-binding site is contributed by K161. Residue N162 participates in 7-phospho-2-dehydro-3-deoxy-D-arabino-heptonate binding. Residues 179–182 (FLET) and N190 each bind NAD(+). E194 is a Zn(2+) binding site. Residues 194–197 (EVIK) and K250 contribute to the 7-phospho-2-dehydro-3-deoxy-D-arabino-heptonate site. E260 functions as the Proton acceptor; for 3-dehydroquinate synthase activity in the catalytic mechanism. 7-phospho-2-dehydro-3-deoxy-D-arabino-heptonate contacts are provided by residues 264–268 (RNLLN) and H271. Position 271 (H271) interacts with Zn(2+). The active-site Proton acceptor; for 3-dehydroquinate synthase activity is the H275. The 7-phospho-2-dehydro-3-deoxy-D-arabino-heptonate site is built by H287 and K356. H287 is a Zn(2+) binding site. Positions 397-842 (VHPGVPKESN…WDTLRQLFSV (446 aa)) are EPSP synthase. Residue C824 is the For EPSP synthase activity of the active site. The tract at residues 864–1056 (SASVFIIGMR…KQKKHSFFVS (193 aa)) is shikimate kinase. Residue 871–878 (GMRGAGKT) participates in ATP binding. The 3-dehydroquinase stretch occupies residues 1057-1277 (LTLPDLRSAS…AAPGQLSATE (221 aa)). H1180 functions as the Proton acceptor; for 3-dehydroquinate dehydratase activity in the catalytic mechanism. Catalysis depends on K1208, which acts as the Schiff-base intermediate with substrate; for 3-dehydroquinate dehydratase activity. A shikimate dehydrogenase region spans residues 1290-1581 (KKRFAIFGNP…ARTAVLGDSA (292 aa)).

This sequence in the N-terminal section; belongs to the sugar phosphate cyclases superfamily. Dehydroquinate synthase family. In the 2nd section; belongs to the EPSP synthase family. The protein in the 3rd section; belongs to the shikimate kinase family. It in the 4th section; belongs to the type-I 3-dehydroquinase family. This sequence in the C-terminal section; belongs to the shikimate dehydrogenase family. Homodimer. The cofactor is Zn(2+).

The protein localises to the cytoplasm. It carries out the reaction 7-phospho-2-dehydro-3-deoxy-D-arabino-heptonate = 3-dehydroquinate + phosphate. It catalyses the reaction 3-dehydroquinate = 3-dehydroshikimate + H2O. The enzyme catalyses shikimate + NADP(+) = 3-dehydroshikimate + NADPH + H(+). The catalysed reaction is shikimate + ATP = 3-phosphoshikimate + ADP + H(+). It carries out the reaction 3-phosphoshikimate + phosphoenolpyruvate = 5-O-(1-carboxyvinyl)-3-phosphoshikimate + phosphate. The protein operates within metabolic intermediate biosynthesis; chorismate biosynthesis; chorismate from D-erythrose 4-phosphate and phosphoenolpyruvate: step 2/7. Its pathway is metabolic intermediate biosynthesis; chorismate biosynthesis; chorismate from D-erythrose 4-phosphate and phosphoenolpyruvate: step 3/7. It participates in metabolic intermediate biosynthesis; chorismate biosynthesis; chorismate from D-erythrose 4-phosphate and phosphoenolpyruvate: step 4/7. It functions in the pathway metabolic intermediate biosynthesis; chorismate biosynthesis; chorismate from D-erythrose 4-phosphate and phosphoenolpyruvate: step 5/7. The protein operates within metabolic intermediate biosynthesis; chorismate biosynthesis; chorismate from D-erythrose 4-phosphate and phosphoenolpyruvate: step 6/7. In terms of biological role, the AROM polypeptide catalyzes 5 consecutive enzymatic reactions in prechorismate polyaromatic amino acid biosynthesis. This chain is Pentafunctional AROM polypeptide, found in Aspergillus terreus (strain NIH 2624 / FGSC A1156).